Here is a 169-residue protein sequence, read N- to C-terminus: UPF0316 protein Dde_2502 (169 aa).

3 helical membrane-spanning segments follow: residues 1-21, 38-58, and 68-88; these read MITA…LCDV, LAFS…SRVI, and LAFA…EGVF.

It belongs to the UPF0316 family.

Its subcellular location is the cell membrane. In Oleidesulfovibrio alaskensis (strain ATCC BAA-1058 / DSM 17464 / G20) (Desulfovibrio alaskensis), this protein is UPF0316 protein Dde_2502.